The chain runs to 302 residues: Sulfate adenylyltransferase subunit 2 (302 aa).

Residues 280–302 (RQGRAIDHDQSGSMELKKRQGYF) form a disordered region.

It belongs to the PAPS reductase family. CysD subfamily. Heterodimer composed of CysD, the smaller subunit, and CysN.

It catalyses the reaction sulfate + ATP + H(+) = adenosine 5'-phosphosulfate + diphosphate. It functions in the pathway sulfur metabolism; hydrogen sulfide biosynthesis; sulfite from sulfate: step 1/3. In terms of biological role, with CysN forms the ATP sulfurylase (ATPS) that catalyzes the adenylation of sulfate producing adenosine 5'-phosphosulfate (APS) and diphosphate, the first enzymatic step in sulfur assimilation pathway. APS synthesis involves the formation of a high-energy phosphoric-sulfuric acid anhydride bond driven by GTP hydrolysis by CysN coupled to ATP hydrolysis by CysD. The polypeptide is Sulfate adenylyltransferase subunit 2 (Vibrio parahaemolyticus serotype O3:K6 (strain RIMD 2210633)).